An 864-amino-acid polypeptide reads, in one-letter code: Disintegrin and metalloproteinase domain-containing protein 15 (864 aa).

An N-terminal signal peptide occupies residues 1-17 (MRLALLWALGLLGAGSP). The disordered stretch occupies residues 18 to 45 (RPSPPLPNIGGTEEEQQASPERTLSGSM). The propeptide occupies 18-207 (RPSPPLPNIG…EQHHAHRLKR (190 aa)). Positions 34-45 (QASPERTLSGSM) are enriched in polar residues. A Cysteine switch motif is present at residues 177 to 184 (HTCAPSWH). Cys179 is a Zn(2+) binding site. Topologically, residues 208 to 696 (DVVTETKIVE…TQLKATSSLT (489 aa)) are extracellular. A Peptidase M12B domain is found at 214–415 (KIVELVIVAD…GMGSCLFERQ (202 aa)). A glycan (N-linked (GlcNAc...) asparagine) is linked at Asn238. Intrachain disulfides connect Cys324–Cys410, Cys366–Cys394, Cys368–Cys377, and Cys481–Cys501. Residue His349 coordinates Zn(2+). Glu350 is a catalytic residue. Zn(2+)-binding residues include His353 and His359. 2 N-linked (GlcNAc...) asparagine glycosylation sites follow: Asn390 and Asn393. A Disintegrin domain is found at 422-509 (SSLCGNMFVD…QCPSDIRLGD (88 aa)). N-linked (GlcNAc...) asparagine glycosylation is found at Asn607 and Asn612. Intrachain disulfides connect Cys658/Cys668, Cys662/Cys674, and Cys676/Cys685. In terms of domain architecture, EGF-like spans 658 to 686 (CRRKCHGHGVCDSSGHCRCEEGWAPPDCM). A helical membrane pass occupies residues 697–717 (TGLLLSLLLLLVLVLLGASYW). 2 positions are modified to phosphotyrosine; by HCK and LCK: Tyr716 and Tyr736. The Cytoplasmic segment spans residues 718–864 (HRARLHQRLC…PPPAASSLYL (147 aa)). The tract at residues 736–864 (YRAPQSCPPE…PPPAASSLYL (129 aa)) is disordered. The segment covering 741 to 750 (SCPPERPGPP) has biased composition (pro residues). Polar residues predominate over residues 752 to 762 (RAQQMTGTKQA). Pro residues-rich tracts occupy residues 768–780 (PVPP…PNPV) and 814–825 (TKPPPPRKPLPA). 2 short sequence motifs (SH3-binding) span residues 816–822 (PPPPRKP) and 851–857 (RPAPPPP).

Interacts specifically with Src family protein-tyrosine kinases (PTKs). Interacts with ITAGV-ITGB3 (vitronectin receptor). Interacts with SH3GL2 and SNX9; this interaction occurs preferentially with ADAM15 precursor, rather than the processed form, suggesting it occurs in a secretory pathway compartment prior to the medial Golgi. Interacts with ITAG9-ITGB1. Interacts with SH3PXD2A. Interacts with ITAGV-ITGB1. Interacts with GRB2, HCK, ITSN1, ITSN2, LYN, MAPK1, MAPK3, NCF1, NCK1, nephrocystin, PTK6, SNX33, LCK and SRC. Zn(2+) is required as a cofactor. In terms of processing, the precursor is cleaved by a furin endopeptidase. An additional membrane proximal site of cleavage affects a small percentage of the proteins and results in disulfide-linked fragments. The prodomain is apparently cleaved in several positions that are N-terminal of the furin cleavage site. Post-translationally, may be partially sialylated. Phosphorylation increases association with PTKs. Expressed moderately in pericytes of retina. Expressed in testis and in spermatozoa from the caput, corpus, and cauda epididymis, as well as in non-capacitated and acrosome-reacted sperm (at protein level). Highly expressed in heart, brain, lung, and kidney. Expressed at lower levels in spleen, liver, testis and muscle.

The protein localises to the endomembrane system. The protein resides in the cell junction. It localises to the adherens junction. Its subcellular location is the cell projection. It is found in the cilium. The protein localises to the flagellum. The protein resides in the cytoplasmic vesicle. It localises to the secretory vesicle. Its subcellular location is the acrosome. Active metalloproteinase with gelatinolytic and collagenolytic activity. Plays a role in the wound healing process. Mediates both heterotypic intraepithelial cell/T-cell interactions and homotypic T-cell aggregation. Inhibits beta-1 integrin-mediated cell adhesion and migration of airway smooth muscle cells. Suppresses cell motility on or towards fibronectin possibly by driving alpha-v/beta-1 integrin (ITAGV-ITGB1) cell surface expression via ERK1/2 inactivation. Cleaves E-cadherin in response to growth factor deprivation. Plays a role in glomerular cell migration. Plays a role in pathological neovascularization. May play a role in cartilage remodeling. May be proteolytically processed, during sperm epididymal maturation and the acrosome reaction. May play a role in sperm-egg binding through its disintegrin domain. Interactions with egg membrane could be mediated via binding between the disintegrin-like domain to one or more integrin receptors on the egg. This Mus musculus (Mouse) protein is Disintegrin and metalloproteinase domain-containing protein 15 (Adam15).